A 341-amino-acid polypeptide reads, in one-letter code: KRR1 small subunit processome component homolog (341 aa).

The region spanning 126–194 (DIIKIGNLVH…VRDIVLETMN (69 aa)) is the KH domain. Residues 230–244 (KNKNISKRKQPKSRK) show a composition bias toward basic residues. Positions 230-327 (KNKNISKRKQ…RPSEASKVDV (98 aa)) are disordered. Residues 271-341 (FLNKEQKQAK…AKLLKANKQK (71 aa)) adopt a coiled-coil conformation. Basic and acidic residues-rich tracts occupy residues 272 to 303 (LNKEQKQAKRQQERVAKQAEAAKKQDERRNKD) and 313 to 327 (EQNRKRPSEASKVDV).

This sequence belongs to the KRR1 family. Monomer. Component of the ribosomal small subunit (SSU) processome.

The protein resides in the nucleus. It is found in the nucleolus. Functionally, required for 40S ribosome biogenesis. Involved in nucleolar processing of pre-18S ribosomal RNA and ribosome assembly. Binds to RNA. Required for female germline development, cell viability during eye development and for survival of dividing cells and epithelial cells during early wing disk development. The sequence is that of KRR1 small subunit processome component homolog from Drosophila grimshawi (Hawaiian fruit fly).